A 251-amino-acid chain; its full sequence is MTEAQRHQILLEMLAQLGFVTVEKVVERLGISPATARRDINKLDESGKLKKVRNGAEAITQQRPRWTPMNLHQAQNHDEKVRIAKAASQLVNTGESVVINCGSTAFLLGREMCGKPVQIITNYLPLANYLIDQEHDSVIIMGGQYNKSQSITLSPQGSENSLYAGHWMFTSGKGLTAEGLYKTDMLTAMAEQKMLSVVGKLVVLVDSSKIGERAGMLFSRADQIDMLITGKNANPEILQQLEAQGVSILRV.

The region spanning 3 to 58 is the HTH deoR-type domain; sequence EAQRHQILLEMLAQLGFVTVEKVVERLGISPATARRDINKLDESGKLKKVRNGAEA. The segment at residues 20–39 is a DNA-binding region (H-T-H motif); that stretch reads VTVEKVVERLGISPATARRD.

It is found in the cytoplasm. Its function is as follows. Represses ulaG and the ulaABCDEF operon. In Escherichia coli (strain SMS-3-5 / SECEC), this protein is HTH-type transcriptional regulator UlaR.